The primary structure comprises 396 residues: Elongation factor Tu (396 aa).

The region spanning 10–206 (KPHVNVGTIG…ALDTYIPTPE (197 aa)) is the tr-type G domain. The segment at 19–26 (GHVDHGKT) is G1. 19–26 (GHVDHGKT) is a binding site for GTP. Position 26 (Thr26) interacts with Mg(2+). The G2 stretch occupies residues 60–64 (GITIN). A G3 region spans residues 81 to 84 (DCPG). GTP-binding positions include 81-85 (DCPGH) and 136-139 (NKAD). The G4 stretch occupies residues 136–139 (NKAD). Residues 174–176 (SAK) form a G5 region.

Belongs to the TRAFAC class translation factor GTPase superfamily. Classic translation factor GTPase family. EF-Tu/EF-1A subfamily. As to quaternary structure, monomer.

The protein resides in the cytoplasm. The enzyme catalyses GTP + H2O = GDP + phosphate + H(+). Functionally, GTP hydrolase that promotes the GTP-dependent binding of aminoacyl-tRNA to the A-site of ribosomes during protein biosynthesis. The polypeptide is Elongation factor Tu (Bordetella avium (strain 197N)).